The primary structure comprises 737 residues: MSGPCSAHRVPPIGPRPTIRSPRITRSSRMTEPKRPSRRGTTRTRPAPDSVGDDNPYLDAPASRASSESRSESGSGLSAEGSGSDAPRPRRPRQPRRPAADAESAPTAADTNDSAPAPTARRGVRRTTRSAAAGTDVSSSTSELPRAESPRSEPRTESRPEPRAENGSETRHESRGGSSEGRPSFRDPSPSGYEASMERPLADRPDAPNRYDRAFDRTDGPERQDTRPERPFQQERPFQQDRQDRHERQDRPDRRDRNGRRRGRGGRPDNRGPGGDRHQSTGPAADRSHDRGPDRNNERAFDRPERPDRQGESSDRFDSQDRGGNRQRNGRRGRNRFRRGAGGNESAPISGSHAPSQGSPSAPIGVEGTMAGWFDPSRDGGFLRRPENSYLPDPTDPFMPPALVRLHQLRRGDRLEVTYGRDHRGRYLVIEVQTLNDGSPVVLEKRPDFNTLVASYPDRKLTLETGRPAKTGPELTRRAIDLIAPIGYGQRALIVAPARAGKTTLLQAIVEGVSINHPEAVLLVLLVDERPEEVSEMITWGYGEVVASSFDMPPKRHVEVAEMTLERARRLVEQGKDVVIVLDSITRLARAHNTVDRGTGRTMSGGLDATAMQKPKAFFGSARMIAPQHGGGSLTIIATALVETGSRMDDVIFEEFKGTGNCEIKLDRSLADRRIFPAFDIATSGTRREEKLYRPDQLEKVHLLRRGLHQLPPQAGMEWLIKRIAATTNNDSLLDGL.

The disordered stretch occupies residues 1-396 (MSGPCSAHRV…ENSYLPDPTD (396 aa)). Composition is skewed to low complexity over residues 16 to 28 (RPTIRSPRITRSS), 62 to 86 (ASRASSESRSESGSGLSAEGSGSDA), and 101 to 111 (DAESAPTAADT). Composition is skewed to basic and acidic residues over residues 145–175 (PRAESPRSEPRTESRPEPRAENGSETRHESR), 196–256 (SMER…DRRD), 266–279 (GRPDNRGPGGDRHQ), and 286–324 (DRSHDRGPDRNNERAFDRPERPDRQGESSDRFDSQDRGG). Residues 328–339 (RNGRRGRNRFRR) show a composition bias toward basic residues. The segment covering 347–360 (APISGSHAPSQGSP) has biased composition (polar residues). The 73-residue stretch at 367-439 (EGTMAGWFDP…IEVQTLNDGS (73 aa)) folds into the Rho RNA-BD domain. Over residues 376–387 (PSRDGGFLRRPE) the composition is skewed to basic and acidic residues. ATP-binding positions include 487-492 (GYGQRA), 499-504 (RAGKTT), and Arg-530.

The protein belongs to the Rho family. As to quaternary structure, homohexamer. The homohexamer assembles into an open ring structure.

In terms of biological role, facilitates transcription termination by a mechanism that involves Rho binding to the nascent RNA, activation of Rho's RNA-dependent ATPase activity, and release of the mRNA from the DNA template. This is Transcription termination factor Rho from Gemmatimonas aurantiaca (strain DSM 14586 / JCM 11422 / NBRC 100505 / T-27).